A 503-amino-acid polypeptide reads, in one-letter code: Ribonuclease Y (503 aa).

The chain crosses the membrane as a helical span at residues 2–22 (GIIIGLIIVSVALIISLCSLL). The region spanning 193 to 253 (TTNLVKLPND…IRREIATKTL (61 aa)) is the KH domain. The HD domain occupies 319–412 (VLLHSVEVAK…VAIADAISAS (94 aa)).

It belongs to the RNase Y family.

The protein resides in the cell membrane. Endoribonuclease that initiates mRNA decay. In Mesoplasma florum (strain ATCC 33453 / NBRC 100688 / NCTC 11704 / L1) (Acholeplasma florum), this protein is Ribonuclease Y.